Here is a 352-residue protein sequence, read N- to C-terminus: Phosphoribosylformylglycinamidine cyclo-ligase (352 aa).

Belongs to the AIR synthase family.

It localises to the cytoplasm. The catalysed reaction is 2-formamido-N(1)-(5-O-phospho-beta-D-ribosyl)acetamidine + ATP = 5-amino-1-(5-phospho-beta-D-ribosyl)imidazole + ADP + phosphate + H(+). Its pathway is purine metabolism; IMP biosynthesis via de novo pathway; 5-amino-1-(5-phospho-D-ribosyl)imidazole from N(2)-formyl-N(1)-(5-phospho-D-ribosyl)glycinamide: step 2/2. In Pseudomonas putida (strain GB-1), this protein is Phosphoribosylformylglycinamidine cyclo-ligase.